Consider the following 237-residue polypeptide: Neural retina-specific leucine zipper protein (237 aa).

Glycyl lysine isopeptide (Lys-Gly) (interchain with G-Cter in SUMO) cross-links involve residues Lys-20 and Lys-24. Residues 23 to 57 (VKREPSEGRPGPPTASLGSTPYSSVPPSPTFSEPG) form a disordered region. Positions 30-93 (GRPGPPTASL…AGEALGLSPE (64 aa)) are minimal transactivation domain (MTD). The segment at 159-185 (RLKQRRRTLKNRGYAQACRSKRLQQRR) is basic motif. One can recognise a bZIP domain in the interval 159–222 (RLKQRRRTLK…DLYKARCDRL (64 aa)). The segment at 187-208 (LEAERARLAAQLDALRAEVARL) is leucine-zipper.

Belongs to the bZIP family. Interacts with FIZ1; this interaction represses transactivation. Interacts (via the leucine-zipper domain) with CRX. Phosphorylated. In terms of processing, disumoylated at Lys-20. Sumoylation modulates the transcriptional activity of NRL on RHO and NR2E3 promoters, and is required for normal rod differentiation. In terms of tissue distribution, expressed in the brain and the retina. Expressed strongly in rod and cone cells (at protein level).

The protein localises to the cytoplasm. It is found in the nucleus. Functionally, acts as a transcriptional activator which regulates the expression of several rod-specific genes, including RHO and PDE6B. Also functions as a transcriptional coactivator, stimulating transcription mediated by the transcription factor CRX and NR2E3. Binds to the rhodopsin promoter in a sequence-specific manner. The protein is Neural retina-specific leucine zipper protein (NRL) of Homo sapiens (Human).